The following is a 107-amino-acid chain: Putative double-stranded DNA mimic protein ECA2319 (107 aa).

The protein belongs to the putative dsDNA mimic protein family.

In terms of biological role, may act as a double-stranded DNA (dsDNA) mimic. Probably regulates the activity of a dsDNA-binding protein. The chain is Putative double-stranded DNA mimic protein ECA2319 from Pectobacterium atrosepticum (strain SCRI 1043 / ATCC BAA-672) (Erwinia carotovora subsp. atroseptica).